Here is a 251-residue protein sequence, read N- to C-terminus: PF03932 family protein CutC (251 aa).

Belongs to the CutC family.

Its subcellular location is the cytoplasm. This is PF03932 family protein CutC from Erwinia tasmaniensis (strain DSM 17950 / CFBP 7177 / CIP 109463 / NCPPB 4357 / Et1/99).